Consider the following 473-residue polypeptide: MTMMDTDEGKTVMCLLTDPEGTHLGSAMYIPQKAGPLQLTQLVNRFLDNEEMLPYSFYVSDEELLVPVGTYLEKNKVSVEKVLTIVYQQQAVFRIRPVNRCSQTIAGHAEAVLCVSFSPDGKQLASGSGDTTVRLWDLYTETPLFTCKGHKNWVLTVAWSPDGKHLVSGSKSGEICCWNPKKGELEGSPLTGHKKWITGISWEPVHLSSPCRRFVTSSKDGDARIWDITLKKSIICLSGHTLAVTCVKWGGDGIIYTGSQDCTIKMWETTQGKLIRELKGHGHWINSLALSTEYVLRTGAFDHTGRQYPPNEEKQKALERYNKTKGDSPERLVSGSDDFTMFLWEPSVSKQPKKRLTGHQQLVNHVYFSPDGKWIASASFDKSVRLWNGITGQFVTVFRGHVGPVYQVSWSADSRLLLSGSKDSTLKIWEIRTKKLKQDLPGHADEVFAVDWSPDGEKVVSGGKDRVLKLWKG.

The tract at residues 9–91 is ubiquitin-like (UBL) domain; that stretch reads GKTVMCLLTD…VLTIVYQQQA (83 aa). 8 WD repeats span residues 107–146, 149–188, 192–236, 239–277, 313–354, 358–399, 400–439, and 442–473; these read GHAE…PLFT, GHKN…LEGS, GHKK…SIIC, GHTL…LIRE, EKQK…QPKK, GHQQ…TVFR, GHVG…LKQD, and GHAD…LWKG. Positions 417-432 match the DWD box motif; that stretch reads LLSGSKDSTLKIWEIR.

Belongs to the NLE1/RSA4 family. Associates with the pre-60S ribosomal particle. As to expression, constitutively and ubiquitously expressed.

It is found in the nucleus. The protein localises to the nucleolus. Its function is as follows. Required for female gametophyte development. The polypeptide is Notchless protein homolog (Arabidopsis thaliana (Mouse-ear cress)).